A 135-amino-acid chain; its full sequence is Large ribosomal subunit protein uL16c (135 aa).

An N-methylmethionine modification is found at Met-1.

Component of the chloroplast large ribosomal subunit (LSU). Mature 70S chloroplast ribosomes of higher plants consist of a small (30S) and a large (50S) subunit. The 30S small subunit contains 1 molecule of ribosomal RNA (16S rRNA) and 24 different proteins. The 50S large subunit contains 3 rRNA molecules (23S, 5S and 4.5S rRNA) and 33 different proteins. Partially alpha-N-monomethylated at Met-1 (10%), whereas 90% of it is blocked to Edman degradation, probably by trimethylation.

The protein resides in the plastid. Its subcellular location is the chloroplast. In terms of biological role, component of the chloroplast ribosome (chloro-ribosome), a dedicated translation machinery responsible for the synthesis of chloroplast genome-encoded proteins, including proteins of the transcription and translation machinery and components of the photosynthetic apparatus. The protein is Large ribosomal subunit protein uL16c of Spinacia oleracea (Spinach).